Reading from the N-terminus, the 269-residue chain is 4-hydroxy-tetrahydrodipicolinate reductase (269 aa).

Residues Gly-8–Met-13 and Glu-34 each bind NAD(+). Arg-35 is an NADP(+) binding site. Residues Gly-98–Thr-100 and Ala-122–Tyr-125 each bind NAD(+). Residue His-155 is the Proton donor/acceptor of the active site. A (S)-2,3,4,5-tetrahydrodipicolinate-binding site is contributed by His-156. The active-site Proton donor is the Lys-159. Gly-165 to Thr-166 lines the (S)-2,3,4,5-tetrahydrodipicolinate pocket.

The protein belongs to the DapB family.

The protein localises to the cytoplasm. The catalysed reaction is (S)-2,3,4,5-tetrahydrodipicolinate + NAD(+) + H2O = (2S,4S)-4-hydroxy-2,3,4,5-tetrahydrodipicolinate + NADH + H(+). The enzyme catalyses (S)-2,3,4,5-tetrahydrodipicolinate + NADP(+) + H2O = (2S,4S)-4-hydroxy-2,3,4,5-tetrahydrodipicolinate + NADPH + H(+). The protein operates within amino-acid biosynthesis; L-lysine biosynthesis via DAP pathway; (S)-tetrahydrodipicolinate from L-aspartate: step 4/4. In terms of biological role, catalyzes the conversion of 4-hydroxy-tetrahydrodipicolinate (HTPA) to tetrahydrodipicolinate. The sequence is that of 4-hydroxy-tetrahydrodipicolinate reductase from Vibrio vulnificus (strain YJ016).